Consider the following 271-residue polypeptide: Meiotic drive suppressor wtf35 (271 aa).

Disordered regions lie at residues 1–24 and 54–75; these read MKNNYTSLKSPLDEEDELKTDHEI and TVPEDSSTGPTETANPNVERRQ. Polar residues predominate over residues 57–69; the sequence is EDSSTGPTETANP. 4 consecutive transmembrane segments (helical) span residues 90–110, 120–140, 176–196, and 213–233; these read LLISVLAVSVVFFTAWVCVNP, AFSVTIGITCPILFIAIFCFF, WENMPMAFSEVFLFNILVGSP, and SLAEHITFVVLSILVFIAETV.

The protein belongs to the WTF family. Homomer. Interacts with other proteins that exhibit high sequence similarity.

Its subcellular location is the spore membrane. The protein localises to the vacuole membrane. Acts as a suppressor component of the dual wtf meiotic drive system, and can suppress but not confer meiotic drive by compatible poisons. Wtf meiotic drive systems promote unequal transmission of alleles from the parental zygote to progeny spores by encoding a poison and an antidote from the same locus; the poison is trans-acting and forms toxic aggregates in all spores within an ascus, wherease the antidote is spore-specific and targets aggregates for degradation by the vacuole. Meiotic drive by wtf systems therefore lead to poisoning of all progeny that do not inherit the dual poison/antidote allele, or express a compatible antidote. This Schizosaccharomyces kambucha (Fission yeast) protein is Meiotic drive suppressor wtf35.